The chain runs to 59 residues: Large ribosomal subunit protein uL30 (59 aa).

Belongs to the universal ribosomal protein uL30 family. As to quaternary structure, part of the 50S ribosomal subunit.

In Staphylococcus aureus (strain JH1), this protein is Large ribosomal subunit protein uL30.